Consider the following 341-residue polypeptide: L-threonine 3-dehydrogenase (341 aa).

A Zn(2+)-binding site is contributed by Cys38. Residues Thr40 and His43 each act as charge relay system in the active site. 6 residues coordinate Zn(2+): His63, Glu64, Cys93, Cys96, Cys99, and Cys107. NAD(+)-binding positions include Ile175, Asp195, Arg200, Leu262–Ile264, and Ile286–Tyr287.

Belongs to the zinc-containing alcohol dehydrogenase family. Homotetramer. Zn(2+) serves as cofactor.

Its subcellular location is the cytoplasm. It catalyses the reaction L-threonine + NAD(+) = (2S)-2-amino-3-oxobutanoate + NADH + H(+). It participates in amino-acid degradation; L-threonine degradation via oxydo-reductase pathway; glycine from L-threonine: step 1/2. In terms of biological role, catalyzes the NAD(+)-dependent oxidation of L-threonine to 2-amino-3-ketobutyrate. This Escherichia fergusonii (strain ATCC 35469 / DSM 13698 / CCUG 18766 / IAM 14443 / JCM 21226 / LMG 7866 / NBRC 102419 / NCTC 12128 / CDC 0568-73) protein is L-threonine 3-dehydrogenase.